We begin with the raw amino-acid sequence, 201 residues long: FMN-dependent NADH:quinone oxidoreductase (201 aa).

Residues S10, S16–S18, M96–F99, and S140–G143 each bind FMN.

The protein belongs to the azoreductase type 1 family. In terms of assembly, homodimer. Requires FMN as cofactor.

It catalyses the reaction 2 a quinone + NADH + H(+) = 2 a 1,4-benzosemiquinone + NAD(+). It carries out the reaction N,N-dimethyl-1,4-phenylenediamine + anthranilate + 2 NAD(+) = 2-(4-dimethylaminophenyl)diazenylbenzoate + 2 NADH + 2 H(+). Quinone reductase that provides resistance to thiol-specific stress caused by electrophilic quinones. Functionally, also exhibits azoreductase activity. Catalyzes the reductive cleavage of the azo bond in aromatic azo compounds to the corresponding amines. This chain is FMN-dependent NADH:quinone oxidoreductase, found in Shigella boydii serotype 4 (strain Sb227).